A 390-amino-acid chain; its full sequence is Ankyrin repeat domain-containing protein 63 (390 aa).

5 ANK repeats span residues 11–40 (AGTR…RSII), 46–79 (QGRT…AVNL), 83–112 (RGRT…DPEA), 116–145 (AGNS…RLGL), and 153–182 (AGLT…RAAA). 2 disordered regions span residues 181–213 (AAAA…SPRR) and 226–245 (AGGH…ELAS). Ser193 is modified (phosphoserine). A Phosphoserine modification is found at Ser304. The disordered stretch occupies residues 320 to 377 (VGLSPHPEGCPGSGRLGLRRRSTAPDIPSLVGEASGPESGPELENNALPFSVPGPKPW).

This Mus musculus (Mouse) protein is Ankyrin repeat domain-containing protein 63.